The following is a 902-amino-acid chain: Inter-alpha-trypsin inhibitor heavy chain H1 (902 aa).

An N-terminal signal peptide occupies residues 1–28 (MDGTMGLQGLLCLCLASHLALQAMPTQG). In terms of domain architecture, VIT spans 29-158 (SPTDSTKGNK…KATFQLTYEE (130 aa)). Residue Cys52 is glycosylated (S-linked (Hex...) cysteine). The N-linked (GlcNAc...) asparagine glycan is linked to Asn69. Phosphoserine is present on Ser121. Asn277 carries an N-linked (GlcNAc...) asparagine glycan. A VWFA domain is found at 282–442 (NKNVVFVIDI…WNFLEVRALE (161 aa)). Phosphothreonine occurs at positions 394 and 399. Residues 637–651 (SASQPSPTHPSSSIQ) show a composition bias toward polar residues. The segment at 637–656 (SASQPSPTHPSSSIQKLPDR) is disordered. An O-linked (GalNAc...) serine glycan is attached at Ser639. Thr644 carries O-linked (GalNAc...) threonine glycosylation. At Asp663 the chain carries Aspartate 1-(chondroitin 4-sulfate)-ester. Positions 664–902 (PHFIIRVPQK…HTDYIVPDIF (239 aa)) are excised as a propeptide. Residue Asn741 is glycosylated (N-linked (GlcNAc...) asparagine).

Belongs to the ITIH family. As to quaternary structure, I-alpha-I plasma protease inhibitors are assembled from one or two heavy chains (HC) and one light chain, bikunin. Inter-alpha-inhibitor (I-alpha-I) is composed of ITIH1/HC1, ITIH2/HC2 and bikunin. Interacts with TNFAIP6 (via Link and CUB domains). Heavy chains are linked to bikunin via chondroitin 4-sulfate esterified to the alpha-carboxyl of the C-terminal aspartate after propeptide cleavage. In terms of processing, the S-linked glycan is composed of two 6-carbon sugars, possibly Glc or Gal.

Its subcellular location is the secreted. Functionally, may act as a carrier of hyaluronan in serum or as a binding protein between hyaluronan and other matrix protein, including those on cell surfaces in tissues to regulate the localization, synthesis and degradation of hyaluronan which are essential to cells undergoing biological processes. In Sus scrofa (Pig), this protein is Inter-alpha-trypsin inhibitor heavy chain H1 (ITIH1).